The chain runs to 415 residues: Gamma-glutamyl phosphate reductase (415 aa).

This sequence belongs to the gamma-glutamyl phosphate reductase family.

The protein resides in the cytoplasm. It carries out the reaction L-glutamate 5-semialdehyde + phosphate + NADP(+) = L-glutamyl 5-phosphate + NADPH + H(+). Its pathway is amino-acid biosynthesis; L-proline biosynthesis; L-glutamate 5-semialdehyde from L-glutamate: step 2/2. Catalyzes the NADPH-dependent reduction of L-glutamate 5-phosphate into L-glutamate 5-semialdehyde and phosphate. The product spontaneously undergoes cyclization to form 1-pyrroline-5-carboxylate. In Dictyoglomus thermophilum (strain ATCC 35947 / DSM 3960 / H-6-12), this protein is Gamma-glutamyl phosphate reductase.